The following is a 180-amino-acid chain: ADP-ribosylation factor 4 (180 aa).

Glycine 2 carries the N-myristoyl glycine lipid modification. GTP contacts are provided by residues 24–31, 67–71, and 126–129; these read GLDAAGKT, DVGGQ, and NKQD. At serine 147 the chain carries Phosphoserine.

The protein belongs to the small GTPase superfamily. Arf family. As to quaternary structure, forms a complex containing RAB11A, ASAP1, RAB3IP, RAP11FIP3 and ARF4; the complex promotes preciliary trafficking; the complex binds to RHO in photoreceptor cells and promotes RHO ciliary transport.

The protein resides in the golgi apparatus. Its subcellular location is the membrane. In terms of biological role, GTP-binding protein that functions as an allosteric activator of the cholera toxin catalytic subunit, an ADP-ribosyltransferase. Involved in protein trafficking; may modulate vesicle budding and uncoating within the Golgi apparatus. Part of the ciliary targeting complex containing Rab11, ASAP1, Rabin8/RAB3IP, RAB11FIP3 and ARF4, which direct preciliary vesicle trafficking to mother centriole and ciliogenesis initiation. This chain is ADP-ribosylation factor 4 (ARF4), found in Homo sapiens (Human).